The chain runs to 684 residues: TBC1 domain family member 23 (684 aa).

In terms of domain architecture, Rab-GAP TBC spans P44 to A225. The residue at position 300 (S300) is a Phosphoserine. Positions E334–V446 constitute a Rhodanese domain. The segment covering S459 to S479 has biased composition (polar residues). Positions S459 to G482 are disordered. Phosphoserine occurs at positions 469, 474, and 507. T514 is subject to Phosphothreonine. Residues T514–D558 form a may mediate the interaction with C17orf75, FAM91A1 and WDR11 region. The interval T514–S684 is may mediate the interaction with WASHC1. S556 bears the Phosphoserine mark. The may mediate the interaction with FKBP15 and WASHC2; required for endosome to Golgi trafficking stretch occupies residues D559–S684.

In terms of assembly, directly interacts with GOLGA1 and GOLGA4. Interacts with FAM91A1, C17ORF75 and WDR11; the interaction recruits TBC1D23 to AP-1-derived vesicles. Directly interacts with WASHC1 and WASHC2A/FAM21A. Interacts with FKBP15.

The protein resides in the golgi apparatus. The protein localises to the trans-Golgi network. It is found in the cytoplasmic vesicle. In terms of biological role, putative Rab GTPase-activating protein which plays a role in vesicular trafficking. Involved in endosome-to-Golgi trafficking. Acts as a bridging protein by binding simultaneously to golgins, including GOLGA1 and GOLGA4, located at the trans-Golgi, and to the WASH complex, located on endosome-derived vesicles. Together with WDR11 complex facilitates the golgin-mediated capture of vesicles generated using AP-1. Plays a role in brain development, including in cortical neuron positioning. May also be important for neurite outgrowth, possibly through its involvement in membrane trafficking and cargo delivery, 2 processes that are essential for axonal and dendritic growth. May act as a general inhibitor of innate immunity signaling, strongly inhibiting multiple TLR and dectin/CLEC7A-signaling pathways. Does not alter initial activation events, but instead affects maintenance of inflammatory gene expression several hours after bacterial lipopolysaccharide (LPS) challenge. The sequence is that of TBC1 domain family member 23 (TBC1D23) from Pongo abelii (Sumatran orangutan).